The sequence spans 356 residues: Alanine racemase (356 aa).

Lysine 35 functions as the Proton acceptor; specific for D-alanine in the catalytic mechanism. An N6-(pyridoxal phosphate)lysine modification is found at lysine 35. Position 130 (arginine 130) interacts with substrate. The Proton acceptor; specific for L-alanine role is filled by tyrosine 253. Methionine 301 lines the substrate pocket.

Belongs to the alanine racemase family. The cofactor is pyridoxal 5'-phosphate.

It catalyses the reaction L-alanine = D-alanine. It functions in the pathway amino-acid biosynthesis; D-alanine biosynthesis; D-alanine from L-alanine: step 1/1. Its function is as follows. Catalyzes the interconversion of L-alanine and D-alanine. May also act on other amino acids. The protein is Alanine racemase (alr) of Erwinia tasmaniensis (strain DSM 17950 / CFBP 7177 / CIP 109463 / NCPPB 4357 / Et1/99).